The following is a 289-amino-acid chain: Stress response regulator protein 1 (289 aa).

The interval 77 to 136 is disordered; sequence LDCTNSEMDEEDDFEDDEDDENLGLINPLHHKSSHGQISDYSPLTPFTEPPSASLSKPSF. Over residues 83-98 the composition is skewed to acidic residues; it reads EMDEEDDFEDDEDDEN. Polar residues predominate over residues 127–136; the sequence is PSASLSKPSF. One can recognise a Response regulatory domain in the interval 163–281; it reads NFLIVDDNII…YDFVMDRIDE (119 aa). D214 is modified (4-aspartylphosphate).

Functionally, required for stress adaptation, morphogenesis and virulence. The chain is Stress response regulator protein 1 (SRR1) from Scheffersomyces stipitis (strain ATCC 58785 / CBS 6054 / NBRC 10063 / NRRL Y-11545) (Yeast).